Here is a 218-residue protein sequence, read N- to C-terminus: N-(5'-phosphoribosyl)anthranilate isomerase (218 aa).

Belongs to the TrpF family.

The catalysed reaction is N-(5-phospho-beta-D-ribosyl)anthranilate = 1-(2-carboxyphenylamino)-1-deoxy-D-ribulose 5-phosphate. It functions in the pathway amino-acid biosynthesis; L-tryptophan biosynthesis; L-tryptophan from chorismate: step 3/5. This chain is N-(5'-phosphoribosyl)anthranilate isomerase, found in Chelativorans sp. (strain BNC1).